A 256-amino-acid chain; its full sequence is Matrix protein (256 aa).

The segment at 1 to 110 (METYVNKLHE…KLAYDVTTPC (110 aa)) is interaction with M2-1. Positions 110–183 (CEIKACSLTC…LNTLENITTT (74 aa)) are nuclear targeting and binding to host importin KPNB1. The short motif at 194–206 (IIPYSGLLLVITV) is the Nuclear export signal element. Residue threonine 205 is modified to Phosphothreonine; by host CK2.

It belongs to the pneumovirinae M protein family. Forms dimers. Forms higher-order oligomers. Interacts with glycoprotein G (via N-terminus). Interacts with protein M2-1; this interaction directs the matrix protein localization to cytoplasmic inclusions comprising viral proteins L, N, P, and M2-1 and mediates the matrix protein association with the nucleocapsid. Interacts with host importin KPNB1; this interaction mediates nuclear import of the matrix protein early during infection. Interacts with host AP3M1; this interaction plays an essential role in trafficking the matrix protein in host cells. Interacts with host CAV1; this interaction probably facilitates viral budding. Interacts with host CFL1; this interaction probably facilitates viral replication. Interacts with host ZNF502; this interaction probably facilitates viral release. Interacts with host RACK1. Phosphorylation is important for oligomerization.

Its subcellular location is the virion. The protein localises to the host cytoplasm. The protein resides in the host nucleus. It is found in the host cell membrane. In terms of biological role, plays a crucial role in virus assembly into filaments and budding. Early in infection, localizes in the nucleus where it inhibits host cell transcription through direct binding to host chromatin. Later in infection, traffics to the cytoplasm through the action of host CRM1 to associate with inclusion bodies, the site of viral transcription and replication. During virus assembly and budding, acts as a bridge between the nucleocapsid and the lipid bilayer. Also plays a role in the inhibition of host interferon-beta response in a RACK1-dependent manner. In Homo sapiens (Human), this protein is Matrix protein (M).